A 387-amino-acid chain; its full sequence is WD repeat-containing protein 89 (387 aa).

WD repeat units lie at residues Lys-21–Glu-65, Gly-68–Val-107, Gly-112–Ser-156, Thr-168–Ala-208, Asn-214–Pro-254, and Gly-319–Thr-358.

This Homo sapiens (Human) protein is WD repeat-containing protein 89 (WDR89).